A 370-amino-acid polypeptide reads, in one-letter code: Protein STRICTOSIDINE SYNTHASE-LIKE 4 (370 aa).

Positions 1–21 are cleaved as a signal peptide; that stretch reads MVLFFSTRFLFFSIFFPCLIS. Residue Asn101 is glycosylated (N-linked (GlcNAc...) asparagine). Tyr303 bears the Phosphotyrosine mark.

It belongs to the strictosidine synthase family.

It localises to the vacuole. This Arabidopsis thaliana (Mouse-ear cress) protein is Protein STRICTOSIDINE SYNTHASE-LIKE 4.